We begin with the raw amino-acid sequence, 432 residues long: Adenosine 3'-phospho 5'-phosphosulfate transporter 1 (432 aa).

9 helical membrane-spanning segments follow: residues 5–25 (WWAV…ETPE), 40–60 (VVNA…VQYF), 109–129 (ALKL…WGVL), 154–174 (FLVL…CVLC), 238–258 (WEYL…LSSG), 265–285 (PATT…DSFT), 299–319 (SVQM…GSLL), 353–373 (LFIF…IMTL), and 387–407 (GHTV…ALLL). Ser-427 carries the phosphoserine modification.

This sequence belongs to the nucleotide-sugar transporter family. SLC35B subfamily.

The protein resides in the golgi apparatus membrane. It catalyses the reaction 3'-phosphoadenylyl sulfate(in) + adenosine 3',5'-bisphosphate(out) = 3'-phosphoadenylyl sulfate(out) + adenosine 3',5'-bisphosphate(in). Probably functions as a 3'-phosphoadenylyl sulfate:adenosine 3',5'-bisphosphate antiporter at the Golgi membranes. Mediates the transport from the cytosol into the lumen of the Golgi of 3'-phosphoadenylyl sulfate/adenosine 3'-phospho 5'-phosphosulfate (PAPS), a universal sulfuryl donor for sulfation events that take place in that compartment. In Pongo abelii (Sumatran orangutan), this protein is Adenosine 3'-phospho 5'-phosphosulfate transporter 1.